The primary structure comprises 426 residues: Serine--tRNA ligase (426 aa).

T229 to E231 lines the L-serine pocket. R260–E262 is an ATP binding site. E283 serves as a coordination point for L-serine. Position 347–350 (E347–S350) interacts with ATP. S383 serves as a coordination point for L-serine.

The protein belongs to the class-II aminoacyl-tRNA synthetase family. Type-1 seryl-tRNA synthetase subfamily. As to quaternary structure, homodimer. The tRNA molecule binds across the dimer.

It is found in the cytoplasm. The catalysed reaction is tRNA(Ser) + L-serine + ATP = L-seryl-tRNA(Ser) + AMP + diphosphate + H(+). It carries out the reaction tRNA(Sec) + L-serine + ATP = L-seryl-tRNA(Sec) + AMP + diphosphate + H(+). Its pathway is aminoacyl-tRNA biosynthesis; selenocysteinyl-tRNA(Sec) biosynthesis; L-seryl-tRNA(Sec) from L-serine and tRNA(Sec): step 1/1. Catalyzes the attachment of serine to tRNA(Ser). Is also able to aminoacylate tRNA(Sec) with serine, to form the misacylated tRNA L-seryl-tRNA(Sec), which will be further converted into selenocysteinyl-tRNA(Sec). The protein is Serine--tRNA ligase of Rickettsia bellii (strain RML369-C).